A 213-amino-acid chain; its full sequence is Uracil phosphoribosyltransferase (213 aa).

Residues Arg-78, Arg-103, and 130 to 138 (DPMLATGGS) each bind 5-phospho-alpha-D-ribose 1-diphosphate. Uracil contacts are provided by residues Ile-193 and 198-200 (GDA). A 5-phospho-alpha-D-ribose 1-diphosphate-binding site is contributed by Asp-199.

This sequence belongs to the UPRTase family. Requires Mg(2+) as cofactor.

It carries out the reaction UMP + diphosphate = 5-phospho-alpha-D-ribose 1-diphosphate + uracil. Its pathway is pyrimidine metabolism; UMP biosynthesis via salvage pathway; UMP from uracil: step 1/1. With respect to regulation, allosterically activated by GTP. In terms of biological role, catalyzes the conversion of uracil and 5-phospho-alpha-D-ribose 1-diphosphate (PRPP) to UMP and diphosphate. The chain is Uracil phosphoribosyltransferase from Bordetella bronchiseptica (strain ATCC BAA-588 / NCTC 13252 / RB50) (Alcaligenes bronchisepticus).